Here is an 809-residue protein sequence, read N- to C-terminus: Lon protease (809 aa).

Positions 42 to 242 (LVIYPLGGRP…KVLTLLKKEL (201 aa)) constitute a Lon N-terminal domain. 395–402 (GPPGVGKT) lines the ATP pocket. The Lon proteolytic domain occupies 629–809 (LTGVGIVTGL…YAEVAKLVFG (181 aa)). Active-site residues include Ser716 and Lys759.

Belongs to the peptidase S16 family. Homohexamer. Organized in a ring with a central cavity.

It localises to the cytoplasm. The enzyme catalyses Hydrolysis of proteins in presence of ATP.. In terms of biological role, ATP-dependent serine protease that mediates the selective degradation of mutant and abnormal proteins as well as certain short-lived regulatory proteins. Required for cellular homeostasis and for survival from DNA damage and developmental changes induced by stress. Degrades polypeptides processively to yield small peptide fragments that are 5 to 10 amino acids long. Binds to DNA in a double-stranded, site-specific manner. This is Lon protease from Magnetococcus marinus (strain ATCC BAA-1437 / JCM 17883 / MC-1).